A 162-amino-acid chain; its full sequence is MRIGHGFDVHKFGENGSGPLIIGGVRIPYEKGLLAHSDGDVALHAATDALLGAAALGDIGKLFPDTDPAFKGADSRGLLREAYRCILAKGYKLGNLDITIIAQAPKMAPHIPQMRVNLAEDLQCHMDDINVKATTTEQLGFTGRGEGIACEAVVLLVNVEQG.

Positions 8 and 10 each coordinate a divalent metal cation. Residues 8–10 (DVH) and 36–37 (HS) each bind 4-CDP-2-C-methyl-D-erythritol 2-phosphate. An a divalent metal cation-binding site is contributed by His44. Residues 58 to 60 (DIG), 63 to 67 (FPDTD), 102 to 108 (AQAPKMA), 134 to 137 (TTTE), Phe141, and Arg144 each bind 4-CDP-2-C-methyl-D-erythritol 2-phosphate.

It belongs to the IspF family. Homotrimer. A divalent metal cation serves as cofactor.

It catalyses the reaction 4-CDP-2-C-methyl-D-erythritol 2-phosphate = 2-C-methyl-D-erythritol 2,4-cyclic diphosphate + CMP. It functions in the pathway isoprenoid biosynthesis; isopentenyl diphosphate biosynthesis via DXP pathway; isopentenyl diphosphate from 1-deoxy-D-xylulose 5-phosphate: step 4/6. In terms of biological role, involved in the biosynthesis of isopentenyl diphosphate (IPP) and dimethylallyl diphosphate (DMAPP), two major building blocks of isoprenoid compounds. Catalyzes the conversion of 4-diphosphocytidyl-2-C-methyl-D-erythritol 2-phosphate (CDP-ME2P) to 2-C-methyl-D-erythritol 2,4-cyclodiphosphate (ME-CPP) with a corresponding release of cytidine 5-monophosphate (CMP). This Yersinia pseudotuberculosis serotype IB (strain PB1/+) protein is 2-C-methyl-D-erythritol 2,4-cyclodiphosphate synthase.